A 264-amino-acid chain; its full sequence is Acyl-[acyl-carrier-protein]--UDP-N-acetylglucosamine O-acyltransferase (264 aa).

It belongs to the transferase hexapeptide repeat family. LpxA subfamily. Homotrimer.

It is found in the cytoplasm. The enzyme catalyses a (3R)-hydroxyacyl-[ACP] + UDP-N-acetyl-alpha-D-glucosamine = a UDP-3-O-[(3R)-3-hydroxyacyl]-N-acetyl-alpha-D-glucosamine + holo-[ACP]. It functions in the pathway glycolipid biosynthesis; lipid IV(A) biosynthesis; lipid IV(A) from (3R)-3-hydroxytetradecanoyl-[acyl-carrier-protein] and UDP-N-acetyl-alpha-D-glucosamine: step 1/6. Functionally, involved in the biosynthesis of lipid A, a phosphorylated glycolipid that anchors the lipopolysaccharide to the outer membrane of the cell. The protein is Acyl-[acyl-carrier-protein]--UDP-N-acetylglucosamine O-acyltransferase of Rickettsia canadensis (strain McKiel).